Here is a 73-residue protein sequence, read N- to C-terminus: MNLETPSQENLNFMLTEITTKLKMVNVGVFENLELDSVDYNALVDIYQLIKRKSTFSPREMQLFAEELRRVRK.

Belongs to the UPF0435 family.

The chain is UPF0435 protein lmo1707 from Listeria monocytogenes serovar 1/2a (strain ATCC BAA-679 / EGD-e).